The sequence spans 182 residues: Nucleoid-associated protein At2g24020, chloroplastic (182 aa).

A chloroplast-targeting transit peptide spans 1-48 (MASMAATTNFTKSMLFPFSHVSGNASLNSQRRTWPKQYKSKNGYRSLR).

This sequence belongs to the YbaB/EbfC family. Homodimer. Interacts with ALB3 and ALB4.

Its subcellular location is the plastid. The protein localises to the chloroplast stroma. Participates with ALB4 in thylakoid protein targeting. May function with specific subset of thylakoidal proteins. Binds to DNA and alters its conformation. May be involved in regulation of gene expression, nucleoid organization and DNA protection. The protein is Nucleoid-associated protein At2g24020, chloroplastic of Arabidopsis thaliana (Mouse-ear cress).